Consider the following 61-residue polypeptide: Lens epithelial cell protein LEP503 (61 aa).

In terms of tissue distribution, preferentially expressed in the lens epithelial cells.

This chain is Lens epithelial cell protein LEP503 (Lenep), found in Rattus norvegicus (Rat).